The sequence spans 172 residues: Large ribosomal subunit protein uL10 (172 aa).

It belongs to the universal ribosomal protein uL10 family. Part of the ribosomal stalk of the 50S ribosomal subunit. The N-terminus interacts with L11 and the large rRNA to form the base of the stalk. The C-terminus forms an elongated spine to which L12 dimers bind in a sequential fashion forming a multimeric L10(L12)X complex.

In terms of biological role, forms part of the ribosomal stalk, playing a central role in the interaction of the ribosome with GTP-bound translation factors. The polypeptide is Large ribosomal subunit protein uL10 (Rhizobium johnstonii (strain DSM 114642 / LMG 32736 / 3841) (Rhizobium leguminosarum bv. viciae)).